The following is a 423-amino-acid chain: AP-1 complex subunit mu-2 (423 aa).

In terms of domain architecture, MHD spans 168 to 421 (KNEVFIDVIE…ITQSGDYQLR (254 aa)).

This sequence belongs to the adaptor complexes medium subunit family. Adaptor protein complex 1 (AP-1) is a heterotetramer composed of two large adaptins (gamma-type subunit AP1G1 and beta-type subunit AP1B1), a medium adaptin (mu-type subunit AP1M1 or AP1M2) and a small adaptin (sigma-type subunit AP1S1 or AP1S2 or AP1S3). Interacts with P2X4. Phosphorylation of membrane-bound AP1M1/AP1M2 increases its affinity for sorting signals.

The protein localises to the cytoplasmic vesicle. The protein resides in the clathrin-coated vesicle membrane. It is found in the golgi apparatus. Its function is as follows. Subunit of clathrin-associated adaptor protein complex 1 that plays a role in protein sorting in the trans-Golgi network (TGN) and endosomes. The AP complexes mediate the recruitment of clathrin to membranes and the recognition of sorting signals within the cytosolic tails of transmembrane cargo molecules. This chain is AP-1 complex subunit mu-2, found in Bos taurus (Bovine).